Reading from the N-terminus, the 92-residue chain is Small ribosomal subunit protein uS19 (92 aa).

Belongs to the universal ribosomal protein uS19 family.

Functionally, protein S19 forms a complex with S13 that binds strongly to the 16S ribosomal RNA. This chain is Small ribosomal subunit protein uS19, found in Hyphomonas neptunium (strain ATCC 15444).